The chain runs to 575 residues: Acetolactate synthase large subunit (575 aa).

Position 57 (Glu-57) interacts with thiamine diphosphate. FAD-binding positions include Arg-159, 265-286 (HGSYAANMALVEADYIINLGSR), and 308-327 (DIDAAELGKIVKTDIPILSD). Residues 395–475 (QHQMWVAQYY…IKVVLINNHS (81 aa)) are thiamine pyrophosphate binding. The Mg(2+) site is built by Asp-446 and Asn-473.

It belongs to the TPP enzyme family. As to quaternary structure, dimer of large and small chains. Requires Mg(2+) as cofactor. The cofactor is thiamine diphosphate.

The catalysed reaction is 2 pyruvate + H(+) = (2S)-2-acetolactate + CO2. Its pathway is amino-acid biosynthesis; L-isoleucine biosynthesis; L-isoleucine from 2-oxobutanoate: step 1/4. The protein operates within amino-acid biosynthesis; L-valine biosynthesis; L-valine from pyruvate: step 1/4. In Lactococcus lactis subsp. lactis (strain IL1403) (Streptococcus lactis), this protein is Acetolactate synthase large subunit (ilvB).